The chain runs to 85 residues: Large ribosomal subunit protein bL27 (85 aa).

The protein belongs to the bacterial ribosomal protein bL27 family.

This is Large ribosomal subunit protein bL27 from Pseudomonas fluorescens (strain SBW25).